A 916-amino-acid chain; its full sequence is DNA mismatch repair protein MutS (916 aa).

An ATP-binding site is contributed by 665–672 (GPNMAGKS).

This sequence belongs to the DNA mismatch repair MutS family.

Functionally, this protein is involved in the repair of mismatches in DNA. It is possible that it carries out the mismatch recognition step. This protein has a weak ATPase activity. In Bradyrhizobium sp. (strain ORS 278), this protein is DNA mismatch repair protein MutS.